The sequence spans 703 residues: Protein CNGC15c (703 aa).

A compositionally biased stretch (basic and acidic residues) spans 1 to 10; that stretch reads MGFDNPRSER. The tract at residues 1-23 is disordered; it reads MGFDNPRSERFEDDPEISKIPTT. Helical transmembrane passes span 91–111, 179–199, 216–236, 255–275, and 372–392; these read IFLV…YLPV, GFWL…WIII, FFII…SSQI, LMLY…LSIE, and FIGE…LFAL. 480-565 provides a ligand contact to a nucleoside 3',5'-cyclic phosphate; that stretch reads LFDQMDERML…WALDPRPSVI (86 aa). The 29-residue stretch at 616–644 folds into the IQ domain; sequence RTWAACFIQAAWRRHKKRKEAAELRAKEN. Positions 676 to 703 are disordered; sequence KGVNMHSGTNSGVVSSLQKPTEPDFSDE. Positions 681 to 694 are enriched in polar residues; that stretch reads HSGTNSGVVSSLQK.

Belongs to the cyclic nucleotide-gated cation channel (TC 1.A.1.5) family. In terms of assembly, interacts (via N-terminus) with DMI1 (via c-terminus). The Nod factor has no effect on this interaction, implying that the complex is maintained after activation. Expressed in roots, stems, leaves, flowers and pods.

It is found in the nucleus membrane. In terms of biological role, cyclic nucleotide-gated channel involved in the establishment of both rhizobial and mycorrhizal associations. Required for full activation of nuclear-localized Ca(2+) oscillations by Nod and Myc factors. Simultaneous activation of the K(+)-permeable channel DMI1 and the Ca(2+) channel CNGC15 can give rise to sustained Ca(2+) oscillations. May function during fertilization in both female and male gametophytic Ca(2+) signaling. This Medicago truncatula (Barrel medic) protein is Protein CNGC15c.